The sequence spans 469 residues: Relaxin-3 receptor 1 (469 aa).

At 1–81 (MQMADAATIA…ESADTEARVR (81 aa)) the chain is on the extracellular side. Residues Asn-36 and Asn-40 are each glycosylated (N-linked (GlcNAc...) asparagine). Residues 82 to 102 (ILISVVYWVVCALGLAGNLLV) traverse the membrane as a helical segment. Over 103–119 (LYLMKSMQGWRKSSINL) the chain is Cytoplasmic. A helical transmembrane segment spans residues 120 to 140 (FVTNLALTDFQFVLTLPFWAV). Residues 141 to 156 (ENALDFKWPFGKAMCK) are Extracellular-facing. An intrachain disulfide couples Cys-155 to Cys-247. The helical transmembrane segment at 157 to 177 (IVSMVTSMNMYASVFFLTAMS) threads the bilayer. The Cytoplasmic portion of the chain corresponds to 178 to 215 (VTRYHSVASALKSHRTRGHGRGDCCGRSLGDSCCFSAK). The helical transmembrane segment at 216 to 236 (ALCVWIWALAALASLPSAIFS) threads the bilayer. The Extracellular portion of the chain corresponds to 237–270 (TTVKVMGEELCLVRFPDKLLGRDRQFWLGLYHSQ). The chain crosses the membrane as a helical span at residues 271 to 291 (KVLLGFVLPLGIIILCYLLLV). Over 292-329 (RFIADRRAAGTKGGAAVAGGRPTGASARRLSKVTKSVT) the chain is Cytoplasmic. A helical transmembrane segment spans residues 330 to 350 (IVVLSFFLCWLPNQALTTWSI). Residues 351–356 (LIKFNA) lie on the Extracellular side of the membrane. A helical membrane pass occupies residues 357-377 (VPFSQEYFLCQVYAFPVSVCL). The Cytoplasmic segment spans residues 378–469 (AHSNSCLNPV…YDLLPSSSAY (92 aa)).

It belongs to the G-protein coupled receptor 1 family. In terms of tissue distribution, expressed predominantly in brain regions. Highest expression in substantia nigra and pituitary, followed by hippocampus, spinal cord, amygdala, caudate nucleus and corpus callosum, quite low level in cerebellum. In peripheral tissues, relatively high levels in adrenal glands, low levels in pancreas, salivary gland, placenta, mammary gland and testis.

It localises to the cell membrane. Functionally, receptor for RNL3/relaxin-3. Binding of the ligand inhibit cAMP accumulation. This Homo sapiens (Human) protein is Relaxin-3 receptor 1 (RXFP3).